Reading from the N-terminus, the 119-residue chain is Beta-2-microglobulin (119 aa).

Positions 1–20 (MACSVVVALLALLSLSGLEA) are cleaved as a signal peptide. An Ig-like C1-type domain is found at 25-114 (PKIQVYSRHP…VTFSTPKTVK (90 aa)). A disulfide bond links cysteine 45 and cysteine 100.

This sequence belongs to the beta-2-microglobulin family. Heterodimer of an alpha chain and a beta chain. Beta-2-microglobulin is the beta-chain of major histocompatibility complex class I molecules.

The protein localises to the secreted. Its function is as follows. Component of the class I major histocompatibility complex (MHC). Involved in the presentation of peptide antigens to the immune system. This Mico emiliae (Emilia's marmoset) protein is Beta-2-microglobulin (B2M).